A 267-amino-acid chain; its full sequence is uncharacterized protein (267 aa).

The stretch at 37 to 62 forms a coiled coil; sequence DSSNNYKKKYKKYKRKYIDLKKQLNY.

This is an uncharacterized protein from Acanthamoeba polyphaga (Amoeba).